The primary structure comprises 80 residues: Antitoxin VapB15 (80 aa).

The interval 60–80 is disordered; the sequence is DFSNDEIESFSDTDRKLADES. Glutamate 67 serves as a coordination point for Mg(2+). Glutamate 67 is a binding site for Mn(2+). Basic and acidic residues predominate over residues 71-80; it reads DTDRKLADES.

As to quaternary structure, forms a VapB15-VapC15(2) heterotrimer and a VapB15(2)-VapC15(2) heterotetramer; each toxin pair forms a homodimer which creates a channel in which the antitoxin binds. Requires Mg(2+) as cofactor. Mn(2+) serves as cofactor.

Its function is as follows. Antitoxin component of a type II toxin-antitoxin (TA) system. Neutralizes the toxic effect of cognate toxin VapC15. The polypeptide is Antitoxin VapB15 (vapB15) (Mycobacterium tuberculosis (strain CDC 1551 / Oshkosh)).